We begin with the raw amino-acid sequence, 447 residues long: Cysteine--tRNA ligase (447 aa).

Position 28 (Cys28) interacts with Zn(2+). The 'HIGH' region motif lies at 30–40 (PTVYNYIHIGN). The Zn(2+) site is built by Cys211, His236, and Glu240. The 'KMSKS' region motif lies at 268-272 (KMSKS). Lys271 serves as a coordination point for ATP.

The protein belongs to the class-I aminoacyl-tRNA synthetase family. As to quaternary structure, monomer. Zn(2+) is required as a cofactor.

It is found in the cytoplasm. The enzyme catalyses tRNA(Cys) + L-cysteine + ATP = L-cysteinyl-tRNA(Cys) + AMP + diphosphate. This chain is Cysteine--tRNA ligase, found in Streptococcus pyogenes serotype M18 (strain MGAS8232).